The sequence spans 434 residues: Arrestin domain-containing protein 1 (434 aa).

Residues Pro-295 to Thr-345 form a disordered region. Residues Val-330–Pro-342 are compositionally biased toward polar residues. Short sequence motifs (PPxY motif) lie at residues Pro-401–Tyr-404 and Pro-414–Tyr-417.

Belongs to the arrestin family. Interacts (via PPxY motifs) with ITCH (via WW domains); the interaction is direct and participates in the recruitment of the ubiquitin-protein ligase ITCH to the NOTCH1 receptor. Interacts with ARRB1 and ARRB2; the interaction is direct. Interacts with TSG101; may recruit TSG101 to the plasma membrane. Interacts (via PPxY motifs) with WWP2 (via WW domains); ubiquitinates ARRDC1. Interacts with SLC11A2; controls the incorporation of SLC11A2 into extracellular vesicles through an ubiquitination-dependent mechanism. Interacts with WWP1 (via WW domains). Interacts with NEDD4 (via WW domains). Interacts with PDCD6IP. Ubiquitinated. Ubiquitination by WWP2; promotes localization to extracellular microvesicles. Ubiquitinated by WWP1.

Its subcellular location is the cell membrane. Functions as an adapter recruiting ubiquitin-protein ligases to their specific substrates. Through an ubiquitination-dependent mechanism plays for instance a role in the incorporation of SLC11A2 into extracellular vesicles. More generally, plays a role in the extracellular transport of proteins between cells through the release in the extracellular space of microvesicles. By participating in the ITCH-mediated ubiquitination and subsequent degradation of NOTCH1, negatively regulates the NOTCH signaling pathway. The protein is Arrestin domain-containing protein 1 of Rattus norvegicus (Rat).